Consider the following 356-residue polypeptide: Vanillin synthase, chloroplastic (356 aa).

A glycan (N-linked (GlcNAc...) asparagine) is linked at N122. Cystine bridges form between C159–C202 and C193–C235. C162 is an active-site residue. N-linked (GlcNAc...) asparagine glycosylation occurs at N251. Residues C293 and C343 are joined by a disulfide bond. Active-site residues include H302 and N322.

The protein belongs to the peptidase C1 family. Forms homodimers, homotrimers and homotetramers. Accumulates in the inner part of vanilla pods (at protein level). Expressed in single cells located a few cell layers from the inner epidermis.

Its subcellular location is the plastid. The protein resides in the chloroplast. The catalysed reaction is (E)-ferulate + H2O = vanillin + acetate. It carries out the reaction 4-O-beta-D-glucosyl-trans-ferulate + H2O = 4-O-beta-D-glucosyl-vanillin + acetate. The protein operates within aromatic compound metabolism; phenylpropanoid biosynthesis. Functionally, involved in the biosynthesis of vanillin (4-hydroxy-3-methoxy-benzaldehyde) and derivative natural products, key components of vanilla pods flavor. Catalyzes the double carbon bond cleavage of ferulic acid to vanillin and of their respective glucosides via a coupled non-oxidative hydratase/lyase reaction. Inactive toward p-coumaric acid, caffeic acid and their glucosides derivatives. This chain is Vanillin synthase, chloroplastic, found in Vanilla planifolia (Vanilla).